The primary structure comprises 248 residues: Segregation and condensation protein A (248 aa).

It belongs to the ScpA family. Component of a cohesin-like complex composed of ScpA, ScpB and the Smc homodimer, in which ScpA and ScpB bind to the head domain of Smc. The presence of the three proteins is required for the association of the complex with DNA.

The protein resides in the cytoplasm. In terms of biological role, participates in chromosomal partition during cell division. May act via the formation of a condensin-like complex containing Smc and ScpB that pull DNA away from mid-cell into both cell halves. The chain is Segregation and condensation protein A from Bacillus cytotoxicus (strain DSM 22905 / CIP 110041 / 391-98 / NVH 391-98).